The chain runs to 767 residues: Tetratricopeptide repeat protein 16 (767 aa).

TPR repeat units follow at residues 18–51, 53–85, 93–126, 128–155, 208–241, 242–275, 288–321, 322–355, and 363–396; these read VREY…DPKL, DFYV…DPGN, AFVL…QPQN, SFSY…REVK, AKQS…NPLD, PNFF…VTDT, LLTY…EQNE, KGLY…SPLD, and GVLQ…SPQK. The tract at residues 612–733 is disordered; the sequence is EVTPAYGQRD…DSLSFSEISS (122 aa). The segment covering 684–718 has biased composition (polar residues); that stretch reads QRSSQKVTKTPSLTHSTTHSDIGESANDTPGQTPW.

This chain is Tetratricopeptide repeat protein 16 (Ttc16), found in Mus musculus (Mouse).